Here is a 495-residue protein sequence, read N- to C-terminus: Lysine--tRNA ligase (495 aa).

Mg(2+) contacts are provided by Glu-406 and Glu-413.

It belongs to the class-II aminoacyl-tRNA synthetase family. In terms of assembly, homodimer. The cofactor is Mg(2+).

It localises to the cytoplasm. The catalysed reaction is tRNA(Lys) + L-lysine + ATP = L-lysyl-tRNA(Lys) + AMP + diphosphate. In Leptospira interrogans serogroup Icterohaemorrhagiae serovar copenhageni (strain Fiocruz L1-130), this protein is Lysine--tRNA ligase.